A 279-amino-acid chain; its full sequence is Topoisomerase I damage affected protein 4 (279 aa).

Residues 1-32 (MNANSTTTAIGLTSPFEKLSFFPHSSNLILAH) are Extracellular-facing. The chain crosses the membrane as a helical span at residues 33 to 53 (LHEIIFSFVFYQLAFSVVAPF). Residues 54-79 (LNKVVFRKHYTTIRDPLLKIDFNVHT) are Cytoplasmic-facing. Residues 70-271 (LLKIDFNVHT…MIRIAKKLAK (202 aa)) form the TLC domain. Residues 80–100 (VSMIQAVVSNTVLLPTLTTPM) form a helical membrane-spanning segment. The Extracellular segment spans residues 101–110 (HYNVVTYTDS). The chain crosses the membrane as a helical span at residues 111-131 (YSSMVSSLSAGYFIWDLTMCV). Over 132 to 135 (RYFK) the chain is Cytoplasmic. A helical transmembrane segment spans residues 136-156 (LYGLEFTGHAIGSVYVMLLSL). At 157–162 (RPFCQP) the chain is on the extracellular side. Residues 163–183 (WIGRFLIYEASTPFVNINWFI) traverse the membrane as a helical segment. The Cytoplasmic portion of the chain corresponds to 184-192 (MQCNAKSKN). The chain crosses the membrane as a helical span at residues 193–213 (SIPLWFNVVNGLLLMTVFFVV). The Extracellular segment spans residues 214 to 238 (RICWGSIASALLFRQMWKVRDELPK). The helical transmembrane segment at 239 to 259 (FSAVTMMSLNIFMNLLNVLWF) threads the bilayer. At 260–279 (KKMIRIAKKLAKPAPTSKLD) the chain is on the cytoplasmic side.

It belongs to the TMEM56 family.

It is found in the membrane. In Saccharomyces cerevisiae (strain ATCC 204508 / S288c) (Baker's yeast), this protein is Topoisomerase I damage affected protein 4 (TDA4).